An 893-amino-acid polypeptide reads, in one-letter code: UPF0182 protein CLM_0018 (893 aa).

7 consecutive transmembrane segments (helical) span residues 9–29 (IPLFIIILFIAFFNKIINFII), 49–69 (AIIILMIPIFIIFFISIWMYY), 94–114 (LFFIFNFIVSIFLAYIFSSSY), 154–174 (VIISLLLFLVITTFIAYFILE), 202–222 (LAIVSGLIILFISFGHLIKIW), 246–266 (FYKIIVVITLISSIVTLLSIV), and 273–293 (VSVCIGITIFLIVSQNIASFL).

This sequence belongs to the UPF0182 family.

It is found in the cell membrane. The chain is UPF0182 protein CLM_0018 from Clostridium botulinum (strain Kyoto / Type A2).